Reading from the N-terminus, the 66-residue chain is UPF0337 protein RPA4217 (66 aa).

This sequence belongs to the UPF0337 (CsbD) family.

This chain is UPF0337 protein RPA4217, found in Rhodopseudomonas palustris (strain ATCC BAA-98 / CGA009).